The sequence spans 286 residues: MQTIPDALFGIIGYPVSHSVSPAMQNAAFKHCKLNYLYLTIAAKPEDLQNVIASMRPLNIRGLNVTIPHKIEVIKYIDTLDPAAKKIGAVNTIVNENGQMKGYNTDFGGFVRLLEHNRIAPAKHRFALLGAGGSAHAISLAICTLGGHLTVLARQEEKAKDLAAKMCLRFKGKAQGLELNEANLEETLAESDIIVNCTPIGMGNLAGQSLISPRLLRPDLTVIDAIYNPCKTRLLEDAEKKGAKIINGLEMLVWQGAMSFEIWTSQKAPFRVMMKEAEMALDENEK.

Residues 19–21 and Thr66 each bind shikimate; that span reads SVS. Residue Lys70 is the Proton acceptor of the active site. Residues Asn91 and Asp106 each coordinate shikimate. Residues 130 to 134 and Ala225 contribute to the NADP(+) site; that span reads GAGGS. Tyr227 lines the shikimate pocket. Gly248 is a binding site for NADP(+).

Belongs to the shikimate dehydrogenase family. Homodimer.

The enzyme catalyses shikimate + NADP(+) = 3-dehydroshikimate + NADPH + H(+). It functions in the pathway metabolic intermediate biosynthesis; chorismate biosynthesis; chorismate from D-erythrose 4-phosphate and phosphoenolpyruvate: step 4/7. Its function is as follows. Involved in the biosynthesis of the chorismate, which leads to the biosynthesis of aromatic amino acids. Catalyzes the reversible NADPH linked reduction of 3-dehydroshikimate (DHSA) to yield shikimate (SA). The protein is Shikimate dehydrogenase (NADP(+)) of Dehalococcoides mccartyi (strain ATCC BAA-2100 / JCM 16839 / KCTC 5957 / BAV1).